The primary structure comprises 368 residues: 3-dehydroquinate synthase (368 aa).

Residues G109 to D113, T133 to S134, K146, K155, and T173 to T176 contribute to the NAD(+) site. Zn(2+) is bound by residues E188, H253, and H270.

This sequence belongs to the sugar phosphate cyclases superfamily. Dehydroquinate synthase family. Co(2+) is required as a cofactor. The cofactor is Zn(2+). NAD(+) serves as cofactor.

The protein localises to the cytoplasm. The enzyme catalyses 7-phospho-2-dehydro-3-deoxy-D-arabino-heptonate = 3-dehydroquinate + phosphate. It functions in the pathway metabolic intermediate biosynthesis; chorismate biosynthesis; chorismate from D-erythrose 4-phosphate and phosphoenolpyruvate: step 2/7. Functionally, catalyzes the conversion of 3-deoxy-D-arabino-heptulosonate 7-phosphate (DAHP) to dehydroquinate (DHQ). This is 3-dehydroquinate synthase from Synechococcus sp. (strain ATCC 27144 / PCC 6301 / SAUG 1402/1) (Anacystis nidulans).